The primary structure comprises 179 residues: Large ribosomal subunit protein uL6 (179 aa).

It belongs to the universal ribosomal protein uL6 family. In terms of assembly, part of the 50S ribosomal subunit.

Functionally, this protein binds to the 23S rRNA, and is important in its secondary structure. It is located near the subunit interface in the base of the L7/L12 stalk, and near the tRNA binding site of the peptidyltransferase center. This is Large ribosomal subunit protein uL6 from Gemmatimonas aurantiaca (strain DSM 14586 / JCM 11422 / NBRC 100505 / T-27).